Consider the following 398-residue polypeptide: S-adenosylmethionine decarboxylase proenzyme (398 aa).

Catalysis depends on residues Glu18 and Glu21. Residue Ser78 is the Schiff-base intermediate with substrate; via pyruvic acid of the active site. Position 78 is a pyruvic acid (Ser); by autocatalysis (Ser78). Cys92 acts as the Proton donor; for catalytic activity in catalysis. Active-site proton acceptor; for processing activity residues include Ser243 and His256.

This sequence belongs to the eukaryotic AdoMetDC family. It depends on pyruvate as a cofactor. Post-translationally, is synthesized initially as an inactive proenzyme. Formation of the active enzyme involves a self-maturation process in which the active site pyruvoyl group is generated from an internal serine residue via an autocatalytic post-translational modification. Two non-identical subunits are generated from the proenzyme in this reaction, and the pyruvate is formed at the N-terminus of the alpha chain, which is derived from the carboxyl end of the proenzyme. The post-translation cleavage follows an unusual pathway, termed non-hydrolytic serinolysis, in which the side chain hydroxyl group of the serine supplies its oxygen atom to form the C-terminus of the beta chain, while the remainder of the serine residue undergoes an oxidative deamination to produce ammonia and the pyruvoyl group blocking the N-terminus of the alpha chain.

The enzyme catalyses S-adenosyl-L-methionine + H(+) = S-adenosyl 3-(methylsulfanyl)propylamine + CO2. The protein operates within amine and polyamine biosynthesis; S-adenosylmethioninamine biosynthesis; S-adenosylmethioninamine from S-adenosyl-L-methionine: step 1/1. In Oryza sativa subsp. japonica (Rice), this protein is S-adenosylmethionine decarboxylase proenzyme (SAMDC).